Reading from the N-terminus, the 653-residue chain is MKLLWQVTVHHHTWNAILLPFVYLTAQVWILCAAIAAAASAGPQNCPSVCSCSNQFSKVVCTRRGLSEVPQGIPSNTRYLNLMENNIQMIQADTFRHLHHLEVLQLGRNSIRQIEVGAFNGLASLNTLELFDNWLTVIPSGAFEYLSKLRELWLRNNPIESIPSYAFNRVPSLMRLDLGELKKLEYISEGAFEGLFNLKYLNLGMCNIKDMPNLTPLVGLEELEMSGNHFPEIRPGSFHGLSSLKKLWVMNSQVSLIERNAFDGLASLVELNLAHNNLSSLPHDLFTPLRYLVELHLHHNPWNCDCDILWLAWWLREYIPTNSTCCGRCHAPMHMRGRYLVEVDQASFQCSAPFIMDAPRDLNISEGRMAELKCRTPPMSSVKWLLPNGTVLSHASRHPRISVLNDGTLNFSHVLLSDTGVYTCMVTNVAGNSNASAYLNVSTAELNTSNYSFFTTVTVETTEISPEDTTRKYKPVPTTSTGYQPAYTTSTTVLIQTTRVPKQVAVPATDTTDKMQTSLDEVMKTTKIIIGCFVAVTLLAAAMLIVFYKLRKRHQQRSTVTAARTVEIIQVDEDIPAATSAAATAAPSGVSGEGAVVLPTIHDHINYNTYKPAHGAHWTENSLGNSLHPTVTTISEPYIIQTHTKDKVQETQI.

The first 38 residues, 1-38, serve as a signal peptide directing secretion; the sequence is MKLLWQVTVHHHTWNAILLPFVYLTAQVWILCAAIAAA. An LRRNT domain is found at 39–75; sequence ASAGPQNCPSVCSCSNQFSKVVCTRRGLSEVPQGIPS. Residues 39 to 527 lie on the Extracellular side of the membrane; sequence ASAGPQNCPS…SLDEVMKTTK (489 aa). Disulfide bonds link Cys46–Cys52 and Cys50–Cys61. 9 LRR repeats span residues 76–97, 100–121, 124–145, 148–169, 172–194, 197–218, 219–240, 243–264, and 267–288; these read NTRYLNLMENNIQMIQADTFRH, HLEVLQLGRNSIRQIEVGAFNG, SLNTLELFDNWLTVIPSGAFEY, KLRELWLRNNPIESIPSYAFNR, SLMRLDLGELKKLEYISEGAFEG, NLKYLNLGMCNIKDMPNLTPLV, GLEELEMSGNHFPEIRPGSFHG, SLKKLWVMNSQVSLIERNAFDG, and SLVELNLAHNNLSSLPHDLFTP. N-linked (GlcNAc...) asparagine glycosylation is found at Asn277, Asn322, Asn363, Asn388, Asn410, Asn434, Asn440, Asn447, and Asn450. The 53-residue stretch at 300 to 352 folds into the LRRCT domain; that stretch reads NPWNCDCDILWLAWWLREYIPTNSTCCGRCHAPMHMRGRYLVEVDQASFQCSA. Cystine bridges form between Cys304-Cys329 and Cys306-Cys350. The 90-residue stretch at 353–442 folds into the Ig-like domain; that stretch reads PFIMDAPRDL…SNASAYLNVS (90 aa). Cys374 and Cys424 form a disulfide bridge. Residues 528 to 548 form a helical membrane-spanning segment; the sequence is IIIGCFVAVTLLAAAMLIVFY. Topologically, residues 549 to 653 are cytoplasmic; it reads KLRKRHQQRS…TKDKVQETQI (105 aa).

Interacts with DLG4. Interacts (via LRR repeats) with NTNG2. Forms a complex with DLG4 and with NMDA receptors. N-glycosylated. As to expression, specifically expressed in brain.

The protein resides in the membrane. Its subcellular location is the postsynaptic cell membrane. Its function is as follows. Synaptic adhesion protein. Regulates the formation of exitatory synapses through the recruitment of pre-and-postsynaptic proteins. Organize the lamina/pathway-specific differentiation of dendrites. Plays an important role for auditory synaptic responses. Involved in the suppression of glioma. The polypeptide is Leucine-rich repeat-containing protein 4 (LRRC4) (Homo sapiens (Human)).